The following is a 167-amino-acid chain: Protein DLS1 (167 aa).

S17 bears the Phosphoserine mark.

Component of the ISW2 complex, which at least consists of ISW2, ITC1, DLS1 and DPB4.

The protein localises to the nucleus. Its function is as follows. Functions as a component of the ISW2 complex, which acts in remodeling the chromatin by catalyzing an ATP-dependent alteration in the structure of nucleosomal DNA. The ISW2 complex is involved in coordinating transcriptional repression and in inheritance of telomeric silencing. It is involved in repression of MAT a-specific genes, INO1, and early meiotic genes during mitotic growth dependent upon transcription factor UME6 and in a parallel pathway to the RPD3-SIN3 histone deacetylase complex. DLS1 is partially required for the ISW2 complex chromatin remodeling activity and is not required for its interaction with chromatin. The protein is Protein DLS1 (DLS1) of Saccharomyces cerevisiae (strain ATCC 204508 / S288c) (Baker's yeast).